Here is a 138-residue protein sequence, read N- to C-terminus: Eukaryotic translation initiation factor 1A (138 aa).

The span at 1–15 shows a compositional bias: basic residues; the sequence is MPKNKGKGGKNRRRG. The segment at 1-28 is disordered; it reads MPKNKGKGGKNRRRGKNENENEKRELTY. Residues 16 to 27 show a composition bias toward basic and acidic residues; sequence KNENENEKRELT. The 75-residue stretch at 22–96 folds into the S1-like domain; it reads EKRELTYAEE…EKGDVILKYT (75 aa).

This sequence belongs to the eIF-1A family.

In terms of biological role, seems to be required for maximal rate of protein biosynthesis. Enhances ribosome dissociation into subunits and stabilizes the binding of the initiator Met-tRNA(I) to 40 S ribosomal subunits. The sequence is that of Eukaryotic translation initiation factor 1A (tif11) from Schizosaccharomyces pombe (strain 972 / ATCC 24843) (Fission yeast).